The sequence spans 178 residues: ATP synthase subunit delta (178 aa).

Belongs to the ATPase delta chain family. As to quaternary structure, F-type ATPases have 2 components, F(1) - the catalytic core - and F(0) - the membrane proton channel. F(1) has five subunits: alpha(3), beta(3), gamma(1), delta(1), epsilon(1). F(0) has three main subunits: a(1), b(2) and c(10-14). The alpha and beta chains form an alternating ring which encloses part of the gamma chain. F(1) is attached to F(0) by a central stalk formed by the gamma and epsilon chains, while a peripheral stalk is formed by the delta and b chains.

Its subcellular location is the cell inner membrane. In terms of biological role, f(1)F(0) ATP synthase produces ATP from ADP in the presence of a proton or sodium gradient. F-type ATPases consist of two structural domains, F(1) containing the extramembraneous catalytic core and F(0) containing the membrane proton channel, linked together by a central stalk and a peripheral stalk. During catalysis, ATP synthesis in the catalytic domain of F(1) is coupled via a rotary mechanism of the central stalk subunits to proton translocation. Its function is as follows. This protein is part of the stalk that links CF(0) to CF(1). It either transmits conformational changes from CF(0) to CF(1) or is implicated in proton conduction. The protein is ATP synthase subunit delta of Teredinibacter turnerae (strain ATCC 39867 / T7901).